A 676-amino-acid polypeptide reads, in one-letter code: MTEFKVVHTICPYCGTGCGIDLVVKDGKVVDSHPFKRHPVNEGKVCIKGNYCYEFVHSEDRLTKPLIKKNGEFIEATWDEALDLIAGKLKQYSPDEVAFFSCARGTNEESYALQKFARTVLKTNNVDHCARIUHAPTVVGLGECFGSGAMTNSITDLAQADVLLIYGSNTFEAHPLIARSIVKAKENGTKIIAIDPRTTHTAKMADLHLKLIPGSNIDLINTITNIIIQEGMADEEFIKNRTEGYDELKDVVSKYTLEKTAELSGIPAETILEAARMYGSAENASIMYCLGVTEYTFGVDNVKSCCNLAMVTGNLGRPGTGVNPLRGQNNVQGACDMGALPNVFPGYQKVGEAYERLENLWETADLNREIGLTSPEVLHKAGEQVKFLHIVGEDPMVADADINHVEKALKSLDFFVVQDIFLTETAKLADVVLPAACWAEKDGTFTNSERRVQRIRKAVDAPGDALPDWLIVRKLAEKMGAGEKLNFESASEIFDEMAKVIPQYAGMSFERLGIDGLQWPCKTPEDPGTPILHKEKFLRPNGLGKFTPVEHKDADELIDEEYPLILTTGRIIFHYNSGTMTRRCDSITNEIDENFIEINTEDAKELGIKPGEKVRVSSRRGTVNADARVTENVIKGVVYMSFHFLEEATNKLTNSAYDPVSKTAELKICAVKVEKI.

One can recognise a 4Fe-4S Mo/W bis-MGD-type domain in the interval 4–60; sequence FKVVHTICPYCGTGCGIDLVVKDGKVVDSHPFKRHPVNEGKVCIKGNYCYEFVHSED. [4Fe-4S] cluster contacts are provided by C11, C14, C18, and C46. Residue U133 is a non-standard amino acid, selenocysteine.

The protein belongs to the prokaryotic molybdopterin-containing oxidoreductase family. In terms of assembly, dimer of an alpha (FdhA2) and a beta (FdhB2) subunit. Requires [4Fe-4S] cluster as cofactor. Mo-bis(molybdopterin guanine dinucleotide) serves as cofactor. The cofactor is Zn(2+).

The enzyme catalyses oxidized coenzyme F420-(gamma-L-Glu)(n) + formate + 2 H(+) = reduced coenzyme F420-(gamma-L-Glu)(n) + CO2. Catalyzes the oxidation of formate to carbon dioxide, with coenzyme F420 as the electron acceptor. In vitro can also use methyl viologen as electron acceptor. The protein is F420-dependent formate dehydrogenase 2 subunit alpha of Methanococcus maripaludis (strain DSM 14266 / JCM 13030 / NBRC 101832 / S2 / LL).